The primary structure comprises 93 residues: UPF0521 protein B (93 aa).

Residues 2 to 58 (SLKEVITSLKNDFHSINKEIDSMKENNEKQEEKIFQEIKKLKLEMELLRKDNLSFKT) adopt a coiled-coil conformation.

The protein belongs to the UPF0521 family.

This is UPF0521 protein B from Dictyostelium discoideum (Social amoeba).